Here is a 284-residue protein sequence, read N- to C-terminus: Tropomyosin (284 aa).

Positions 1 to 284 (MEAIKNKMQA…DQTFAELTGY (284 aa)) form a coiled coil. Residues 22-43 (AEIAEQKSRDANLRAEKSEEEV) are disordered.

It belongs to the tropomyosin family. In terms of assembly, homodimer.

In terms of biological role, tropomyosin, in association with the troponin complex, plays a central role in the calcium dependent regulation of muscle contraction. This Lepidoglyphus destructor (Storage mite) protein is Tropomyosin.